The following is a 198-amino-acid chain: ATP-dependent Clp protease proteolytic subunit 2 (198 aa).

Residue serine 94 is the Nucleophile of the active site. The active site involves histidine 119.

This sequence belongs to the peptidase S14 family. In terms of assembly, fourteen ClpP subunits assemble into 2 heptameric rings which stack back to back to give a disk-like structure with a central cavity, resembling the structure of eukaryotic proteasomes.

Its subcellular location is the cytoplasm. The enzyme catalyses Hydrolysis of proteins to small peptides in the presence of ATP and magnesium. alpha-casein is the usual test substrate. In the absence of ATP, only oligopeptides shorter than five residues are hydrolyzed (such as succinyl-Leu-Tyr-|-NHMec, and Leu-Tyr-Leu-|-Tyr-Trp, in which cleavage of the -Tyr-|-Leu- and -Tyr-|-Trp bonds also occurs).. Cleaves peptides in various proteins in a process that requires ATP hydrolysis. Has a chymotrypsin-like activity. Plays a major role in the degradation of misfolded proteins. The chain is ATP-dependent Clp protease proteolytic subunit 2 from Borreliella burgdorferi (strain ATCC 35210 / DSM 4680 / CIP 102532 / B31) (Borrelia burgdorferi).